Consider the following 259-residue polypeptide: MDDYAVLSDTELAAVLRQYNIPHGPIVGSTRKLYEKKIFEYETQRRRLLPPNSSSSSFSYQFSDLDSAAVDSDMYDLPKKEDALLYQSKDYNDDYYEESYLTTKTYGEPESVGMSKSFRQPGTSLVDADTFHHQVRDDIFSSLEEEGKDRERLIYGQDSAYQSIAHYRPISNVSRSSLGLSYYPTSSTSSVSSSSSSPSSWLTRRAIRPEKQAPAAALGQDRQVPLWGQLLLFLVFAAFLLFVYYSIQAEEGNPFWMDP.

At Met-1 the chain carries N-acetylmethionine. Residues 1 to 45 (MDDYAVLSDTELAAVLRQYNIPHGPIVGSTRKLYEKKIFEYETQR) enclose the LEM domain. Residues Ser-8, Ser-29, Ser-54, Ser-72, Ser-88, Ser-99, Ser-141, and Ser-142 each carry the phosphoserine modification. The tract at residues 46–223 (RRLLPPNSSS…PAAALGQDRQ (178 aa)) is interaction with F-actin. Tyr-161 carries the post-translational modification Phosphotyrosine. The segment at 168–187 (RPISNVSRSSLGLSYYPTSS) is interaction with CTNNB1. Phosphoserine occurs at positions 171, 174, and 176. The helical transmembrane segment at 224–244 (VPLWGQLLLFLVFAAFLLFVY) threads the bilayer.

Interacts with lamins A and C, BANF1, GMCL, BCLAF1 and YTHDC1/YT521. Interacts with TMEM43; the interaction retains emerin in the inner nuclear membrane. Interacts with ACTB, SPTAN1, F-actin, CTNNB1 and beta-tubulin. Interacts with SUN1 and SUN2. Interacts with TMEM201. Interacts with NEMP1. In terms of tissue distribution, in the ovary, highest expression is seen in primordial follicle oocytes (at protein level). Detected in embryonic fibroblasts, skeletal muscle, heart muscle and tongue epithelium (at protein level). Widely expressed.

It is found in the nucleus inner membrane. The protein localises to the nucleus outer membrane. Its function is as follows. Stabilizes and promotes the formation of a nuclear actin cortical network. Stimulates actin polymerization in vitro by binding and stabilizing the pointed end of growing filaments. Inhibits beta-catenin activity by preventing its accumulation in the nucleus. Acts by influencing the nuclear accumulation of beta-catenin through a CRM1-dependent export pathway. Links centrosomes to the nuclear envelope via a microtubule association. Required for proper localization of non-farnesylated prelamin-A/C. Together with NEMP1, contributes to nuclear envelope stiffness in germ cells. This is Emerin (Emd) from Mus musculus (Mouse).